A 4486-amino-acid chain; its full sequence is Dynein axonemal heavy chain 9 (4486 aa).

The segment at 1–1831 (MRLAEERAAL…FANICDAQFL (1831 aa)) is stem. 5 coiled-coil regions span residues 381–410 (DLLR…EFQD), 504–529 (QSTD…LGTI), 639–662 (AEGK…ETRL), 752–823 (TLLE…TWVT), and 1326–1355 (NINV…AWDA). AAA regions lie at residues 1832 to 2053 (YSYE…VLVV), 2113 to 2334 (ALVR…TRFK), 2440 to 2688 (EFDP…IFQG), and 2787 to 3036 (NHNE…EQRY). Residues 1870-1877 (GPAGTGKT), 2151-2158 (GGAGTGKS), 2478-2485 (GTAGTGKS), and 2825-2832 (GVGGSGKQ) contribute to the ATP site. Coiled coils occupy residues 3051-3154 (YQSL…AKAE), 3285-3341 (KRQA…AEVT), and 3640-3675 (LVEN…REHY). The interval 3051–3341 (YQSLLHRHRK…LKCQQEAEVT (291 aa)) is stalk. 2 AAA regions span residues 3429-3656 (LMDD…EVEK) and 3866-4092 (LRDF…VLYN).

Belongs to the dynein heavy chain family. In terms of assembly, consists of at least two heavy chains and a number of intermediate and light chains. Interacts with ODAD1. Expressed in upper and lower respiratory airway epithelia (at protein level). Not detected in spermatozoa (at protein level).

The protein localises to the cytoplasm. It is found in the cytoskeleton. It localises to the cilium axoneme. Force generating protein required for cilia beating in respiratory epithelia. Produces force towards the minus ends of microtubules. Dynein has ATPase activity; the force-producing power stroke is thought to occur on release of ADP. The chain is Dynein axonemal heavy chain 9 from Homo sapiens (Human).